The sequence spans 555 residues: Formate--tetrahydrofolate ligase (555 aa).

65 to 72 (TPAGEGKS) contacts ATP.

It belongs to the formate--tetrahydrofolate ligase family.

It catalyses the reaction (6S)-5,6,7,8-tetrahydrofolate + formate + ATP = (6R)-10-formyltetrahydrofolate + ADP + phosphate. It participates in one-carbon metabolism; tetrahydrofolate interconversion. The protein is Formate--tetrahydrofolate ligase of Lactococcus lactis subsp. lactis (strain IL1403) (Streptococcus lactis).